The sequence spans 309 residues: Peptide methionine sulfoxide reductase MsrA/MsrB (309 aa).

Residues 1 to 153 are peptide methionine sulfoxide reductase A; the sequence is MIYLAGGCFW…PNGYCHIDIN (153 aa). Cysteine 8 is a catalytic residue. Residues 170–293 enclose the MsrB domain; that stretch reads ATEIKEKLSA…NSLSITFIPK (124 aa). Residue cysteine 282 is the Nucleophile of the active site.

This sequence in the N-terminal section; belongs to the MsrA Met sulfoxide reductase family. The protein in the C-terminal section; belongs to the MsrB Met sulfoxide reductase family.

The enzyme catalyses L-methionyl-[protein] + [thioredoxin]-disulfide + H2O = L-methionyl-(S)-S-oxide-[protein] + [thioredoxin]-dithiol. It carries out the reaction [thioredoxin]-disulfide + L-methionine + H2O = L-methionine (S)-S-oxide + [thioredoxin]-dithiol. It catalyses the reaction L-methionyl-[protein] + [thioredoxin]-disulfide + H2O = L-methionyl-(R)-S-oxide-[protein] + [thioredoxin]-dithiol. In terms of biological role, has an important function as a repair enzyme for proteins that have been inactivated by oxidation. Catalyzes the reversible oxidation-reduction of methionine sulfoxide in proteins to methionine. In Streptococcus pyogenes serotype M1, this protein is Peptide methionine sulfoxide reductase MsrA/MsrB (msrAB).